Here is a 127-residue protein sequence, read N- to C-terminus: Fluoride-specific ion channel FluC 1 (127 aa).

4 helical membrane-spanning segments follow: residues threonine 4–leucine 24, valine 35–phenylalanine 55, threonine 71–isoleucine 91, and glycine 101–valine 121. The Na(+) site is built by glycine 75 and threonine 78.

This sequence belongs to the fluoride channel Fluc/FEX (TC 1.A.43) family.

The protein localises to the cell inner membrane. It catalyses the reaction fluoride(in) = fluoride(out). Its activity is regulated as follows. Na(+) is not transported, but it plays an essential structural role and its presence is essential for fluoride channel function. Fluoride-specific ion channel. Important for reducing fluoride concentration in the cell, thus reducing its toxicity. In Yersinia pestis, this protein is Fluoride-specific ion channel FluC 1.